Reading from the N-terminus, the 478-residue chain is Cysteine protease ATG4B (478 aa).

Residues 1-15 (MTSLPDRGVSSSSSD) are compositionally biased toward polar residues. Positions 1–31 (MTSLPDRGVSSSSSDPLCEGNIAPCSSSSEQ) are disordered. The active-site Nucleophile is the Cys164. Active-site residues include Asp361 and His363.

The protein belongs to the peptidase C54 family. As to quaternary structure, interacts with ATG8.

It localises to the cytoplasm. The catalysed reaction is [protein]-C-terminal L-amino acid-glycyl-phosphatidylethanolamide + H2O = [protein]-C-terminal L-amino acid-glycine + a 1,2-diacyl-sn-glycero-3-phosphoethanolamine. In terms of biological role, cysteine protease that plays a key role in autophagy by mediating both proteolytic activation and delipidation of ATG8 family proteins. The protease activity is required for proteolytic activation of ATG8 family proteins: cleaves the C-terminal amino acid of ATG8 proteins to reveal a C-terminal glycine. Exposure of the glycine at the C-terminus is essential for ATG8 proteins conjugation to phosphatidylethanolamine (PE) and insertion to membranes, which is necessary for autophagy. In addition to the protease activity, also mediates delipidation of PE-conjugated ATG8 proteins. In Oryza sativa subsp. japonica (Rice), this protein is Cysteine protease ATG4B (ATG4B).